Reading from the N-terminus, the 391-residue chain is UPF0229 protein BCA_0588 (391 aa).

Polar residues predominate over residues 1 to 16 (MGEENQPNYTISQENW). Disordered regions lie at residues 1–31 (MGEENQPNYTISQENWSLHRKGYDDQQRHQE) and 80–117 (HVGQGNGDSKVGDVVARDGSGGQKQKGPGKGQGAGDAA). Basic and acidic residues predominate over residues 21–31 (KGYDDQQRHQE). The segment covering 98–115 (GSGGQKQKGPGKGQGAGD) has biased composition (gly residues).

Belongs to the UPF0229 family.

This is UPF0229 protein BCA_0588 from Bacillus cereus (strain 03BB102).